Reading from the N-terminus, the 476-residue chain is Bifunctional protein HldE (476 aa).

The ribokinase stretch occupies residues 1–318 (MKPILPDYNS…AEAVHGSQDT (318 aa)). Residue 195–198 (NMKE) participates in ATP binding. Aspartate 264 is a catalytic residue. The tract at residues 344-476 (MTNGCFDILH…IINAIKGGKG (133 aa)) is cytidylyltransferase.

In the N-terminal section; belongs to the carbohydrate kinase PfkB family. This sequence in the C-terminal section; belongs to the cytidylyltransferase family. Homodimer.

The enzyme catalyses D-glycero-beta-D-manno-heptose 7-phosphate + ATP = D-glycero-beta-D-manno-heptose 1,7-bisphosphate + ADP + H(+). It carries out the reaction D-glycero-beta-D-manno-heptose 1-phosphate + ATP + H(+) = ADP-D-glycero-beta-D-manno-heptose + diphosphate. Its pathway is nucleotide-sugar biosynthesis; ADP-L-glycero-beta-D-manno-heptose biosynthesis; ADP-L-glycero-beta-D-manno-heptose from D-glycero-beta-D-manno-heptose 7-phosphate: step 1/4. It functions in the pathway nucleotide-sugar biosynthesis; ADP-L-glycero-beta-D-manno-heptose biosynthesis; ADP-L-glycero-beta-D-manno-heptose from D-glycero-beta-D-manno-heptose 7-phosphate: step 3/4. It participates in bacterial outer membrane biogenesis; LPS core biosynthesis. In terms of biological role, catalyzes the phosphorylation of D-glycero-D-manno-heptose 7-phosphate at the C-1 position to selectively form D-glycero-beta-D-manno-heptose-1,7-bisphosphate. Functionally, catalyzes the ADP transfer from ATP to D-glycero-beta-D-manno-heptose 1-phosphate, yielding ADP-D-glycero-beta-D-manno-heptose. This chain is Bifunctional protein HldE, found in Vibrio parahaemolyticus serotype O3:K6 (strain RIMD 2210633).